The primary structure comprises 153 residues: Large ribosomal subunit protein uL30 (153 aa).

The protein belongs to the universal ribosomal protein uL30 family. Part of the 50S ribosomal subunit.

This chain is Large ribosomal subunit protein uL30, found in Methanosarcina acetivorans (strain ATCC 35395 / DSM 2834 / JCM 12185 / C2A).